A 317-amino-acid chain; its full sequence is Small ribosomal subunit biogenesis GTPase RsgA (317 aa).

The region spanning 88–249 (DQYKSKLFAA…LIDSPGFQEF (162 aa)) is the CP-type G domain. GTP-binding positions include 136 to 139 (NKID) and 190 to 198 (GQSGMGKST). Zn(2+) is bound by residues cysteine 273, cysteine 278, histidine 280, and cysteine 286.

It belongs to the TRAFAC class YlqF/YawG GTPase family. RsgA subfamily. In terms of assembly, monomer. Associates with 30S ribosomal subunit, binds 16S rRNA. Zn(2+) serves as cofactor.

It is found in the cytoplasm. In terms of biological role, one of several proteins that assist in the late maturation steps of the functional core of the 30S ribosomal subunit. Helps release RbfA from mature subunits. May play a role in the assembly of ribosomal proteins into the subunit. Circularly permuted GTPase that catalyzes slow GTP hydrolysis, GTPase activity is stimulated by the 30S ribosomal subunit. This Paraburkholderia phymatum (strain DSM 17167 / CIP 108236 / LMG 21445 / STM815) (Burkholderia phymatum) protein is Small ribosomal subunit biogenesis GTPase RsgA.